Consider the following 591-residue polypeptide: Developmental and secondary metabolism regulator VEA1 (591 aa).

The segment at 1 to 22 (MATKASSILHPPNETEHTMSRI) is disordered. A compositionally biased stretch (basic and acidic residues) spans 13-22 (NETEHTMSRI). Residues 26-235 (GKKLTYNLKV…AEQGCRVRIR (210 aa)) form the Velvet domain. The Nuclear localization signal signature appears at 40-45 (ERARAC). Residues 238–547 (VRMRRREPKP…TSGGSDDEIM (310 aa)) are disordered. The segment covering 245-260 (PKPNKDYGAYDDRRIT) has biased composition (basic and acidic residues). The span at 306 to 321 (HQQPSPNLAATPQSHL) shows a compositional bias: polar residues. Residues 330-347 (YHAPPPPPTAHPAPPPAY) are compositionally biased toward pro residues. The segment covering 386 to 395 (YDQSKSSLPM) has biased composition (polar residues). Positions 422–433 (PSQLHPTQQYQQ) are enriched in low complexity. Positions 434–448 (PTPPPPPPAAIAPHP) are enriched in pro residues. Residues 452–493 (RTPTKPSPSTFFPPTPSRLSVEVDSSNEADDAILNAIRTRRG) form a PEST region. A compositionally biased stretch (basic and acidic residues) spans 494-516 (YILDEKSGATKRSRDSSDHDLKP).

The protein belongs to the velvet family. VeA subfamily. Component of the heterotrimeric velvet complex composed of LAE1, VEA1 and VEL2; VEA1 acting as a bridging protein between LAE1 and VEL2.

The protein localises to the nucleus. It is found in the cytoplasm. Functionally, component of the velvet transcription factor complex that controls sexual/asexual developmental ratio in response to light, promoting sexual development in the darkness while stimulating asexual sporulation under illumination. The velvet complex hat acts as a global regulator for secondary metabolite gene expression. Regulates cleistothecial formation and hyphal growth. Acts as a positive regulator of virulence. The protein is Developmental and secondary metabolism regulator VEA1 of Ajellomyces capsulatus (Darling's disease fungus).